The sequence spans 360 residues: Peptide chain release factor 1 (360 aa).

At Q234 the chain carries N5-methylglutamine.

Belongs to the prokaryotic/mitochondrial release factor family. Methylated by PrmC. Methylation increases the termination efficiency of RF1.

It is found in the cytoplasm. Functionally, peptide chain release factor 1 directs the termination of translation in response to the peptide chain termination codons UAG and UAA. The polypeptide is Peptide chain release factor 1 (Clostridium perfringens (strain 13 / Type A)).